The following is a 174-amino-acid chain: MAEASEFNFNLRRKSRAVTASRRVKEEVKEKQKMDDSKSQVVDVDSVSVYSHESSRSNYSDAYEKLKREPVVEESNDARYRTFEFSEDEETFKPANKMSDKSQRNSKSKHTEGLECSDTVLEKISELTLEIEKVKQMNQPITVDAAFNMTLRNVDNLTTRQKQALVNSIINSMN.

2 disordered regions span residues 18 to 40 (VTAS…SKSQ) and 86 to 114 (SEDE…TEGL). Composition is skewed to basic and acidic residues over residues 23–38 (RVKE…DDSK) and 98–113 (MSDK…HTEG).

It belongs to the rotavirus NSP5 family. As to quaternary structure, homodimer. Interacts with VP1. Interacts with VP2. Interacts with NSP2 and NSP6. O-glycosylated.

The protein resides in the host cytoplasm. Its function is as follows. Plays an essential role in the viral genome replication. Participates, together with NSP2, in the formation of viral factories (viroplasms) which are large inclusions in the host cytoplasm where replication intermediates are assembled and viral RNA replication takes place. Orchestrates the recruitment of viroplasmic proteins such as capsid proteins to these factories. The polypeptide is Non-structural protein 5 (Rotavirus B (isolate RVB/Rat/United States/IDIR/1984/G1P[X]) (RV-B)).